The sequence spans 85 residues: Teretoxin Tan9.6 (85 aa).

The first 21 residues, 1–21 (MMSKTGALLLTFMILVLFSMA), serve as a signal peptide directing secretion. Positions 22-52 (AADALGERFEDHEQKIREQDAGVGLLSLMGR) are excised as a propeptide.

In terms of processing, contains 3 disulfide bonds. Expressed by the venom duct.

It is found in the secreted. The polypeptide is Teretoxin Tan9.6 (Terebra anilis (Auger snail)).